Here is a 420-residue protein sequence, read N- to C-terminus: Glucose-1-phosphate adenylyltransferase (420 aa).

Alpha-D-glucose 1-phosphate contacts are provided by residues Tyr-107, Gly-173, Glu-188–Lys-189, and Ser-206.

The protein belongs to the bacterial/plant glucose-1-phosphate adenylyltransferase family. In terms of assembly, homotetramer.

It carries out the reaction alpha-D-glucose 1-phosphate + ATP + H(+) = ADP-alpha-D-glucose + diphosphate. It functions in the pathway glycan biosynthesis; glycogen biosynthesis. Functionally, involved in the biosynthesis of ADP-glucose, a building block required for the elongation reactions to produce glycogen. Catalyzes the reaction between ATP and alpha-D-glucose 1-phosphate (G1P) to produce pyrophosphate and ADP-Glc. The sequence is that of Glucose-1-phosphate adenylyltransferase from Shewanella frigidimarina (strain NCIMB 400).